A 337-amino-acid polypeptide reads, in one-letter code: Transaldolase (337 aa).

Lys-115 carries the N6-acetyllysine modification. Lys-142 acts as the Schiff-base intermediate with substrate in catalysis. Lys-219 carries the post-translational modification N6-acetyllysine. Phosphoserine is present on residues Ser-237 and Ser-256. N6-acetyllysine is present on residues Lys-269, Lys-286, and Lys-321.

The protein belongs to the transaldolase family. Type 1 subfamily. In terms of assembly, homodimer.

The protein localises to the cytoplasm. It carries out the reaction D-sedoheptulose 7-phosphate + D-glyceraldehyde 3-phosphate = D-erythrose 4-phosphate + beta-D-fructose 6-phosphate. The protein operates within carbohydrate degradation; pentose phosphate pathway; D-glyceraldehyde 3-phosphate and beta-D-fructose 6-phosphate from D-ribose 5-phosphate and D-xylulose 5-phosphate (non-oxidative stage): step 2/3. Transaldolase is important for the balance of metabolites in the pentose-phosphate pathway. The polypeptide is Transaldolase (TALDO1) (Bos taurus (Bovine)).